A 205-amino-acid polypeptide reads, in one-letter code: Small ribosomal subunit protein uS5 (205 aa).

Residues 49–112 (LVDEVLDINM…VSAKINLVKV (64 aa)) enclose the S5 DRBM domain.

This sequence belongs to the universal ribosomal protein uS5 family. In terms of assembly, part of the 30S ribosomal subunit. Contacts protein S4.

In terms of biological role, with S4 and S12 plays an important role in translational accuracy. The chain is Small ribosomal subunit protein uS5 from Methanospirillum hungatei JF-1 (strain ATCC 27890 / DSM 864 / NBRC 100397 / JF-1).